A 347-amino-acid chain; its full sequence is NADH-ubiquinone oxidoreductase chain 2 (347 aa).

10 helical membrane passes run Pro3–Ser23, His25–Met45, Tyr59–Leu79, Ile96–Pro116, Gly148–Leu170, Ile178–Pro198, Met200–Met220, Ile247–Ile267, Ile276–Leu296, and Leu326–Leu346.

Belongs to the complex I subunit 2 family. Core subunit of respiratory chain NADH dehydrogenase (Complex I) which is composed of 45 different subunits. Interacts with TMEM242.

The protein resides in the mitochondrion inner membrane. It catalyses the reaction a ubiquinone + NADH + 5 H(+)(in) = a ubiquinol + NAD(+) + 4 H(+)(out). Functionally, core subunit of the mitochondrial membrane respiratory chain NADH dehydrogenase (Complex I) which catalyzes electron transfer from NADH through the respiratory chain, using ubiquinone as an electron acceptor. Essential for the catalytic activity and assembly of complex I. The protein is NADH-ubiquinone oxidoreductase chain 2 of Saccopteryx leptura (Lesser sac-winged bat).